The sequence spans 156 residues: Endoribonuclease YbeY (156 aa).

3 residues coordinate Zn(2+): His-119, His-123, and His-129.

This sequence belongs to the endoribonuclease YbeY family. Zn(2+) is required as a cofactor.

Its subcellular location is the cytoplasm. Its function is as follows. Single strand-specific metallo-endoribonuclease involved in late-stage 70S ribosome quality control and in maturation of the 3' terminus of the 16S rRNA. This Buchnera aphidicola subsp. Cinara cedri (strain Cc) protein is Endoribonuclease YbeY.